The primary structure comprises 101 residues: ATP-dependent Clp protease adapter protein ClpS (101 aa).

It belongs to the ClpS family. Binds to the N-terminal domain of the chaperone ClpA.

Its function is as follows. Involved in the modulation of the specificity of the ClpAP-mediated ATP-dependent protein degradation. This is ATP-dependent Clp protease adapter protein ClpS from Corynebacterium efficiens (strain DSM 44549 / YS-314 / AJ 12310 / JCM 11189 / NBRC 100395).